Reading from the N-terminus, the 484-residue chain is Cysteine--tRNA ligase (484 aa).

Cys-27 is a binding site for Zn(2+). A 'HIGH' region motif is present at residues 29–39; the sequence is PTTYNYIHLGN. Zn(2+)-binding residues include Cys-207, His-232, and Glu-236. The 'KMSKS' region motif lies at 264–268; it reads KMSKS. Lys-267 contributes to the ATP binding site.

Belongs to the class-I aminoacyl-tRNA synthetase family. Monomer. Zn(2+) serves as cofactor.

It localises to the cytoplasm. It carries out the reaction tRNA(Cys) + L-cysteine + ATP = L-cysteinyl-tRNA(Cys) + AMP + diphosphate. In Pelotomaculum thermopropionicum (strain DSM 13744 / JCM 10971 / SI), this protein is Cysteine--tRNA ligase.